The following is a 624-amino-acid chain: Probable potassium transport system protein Kup (624 aa).

A run of 12 helical transmembrane segments spans residues 16 to 36 (ALLT…SPLY), 59 to 79 (IISM…VMLV), 106 to 126 (FVAV…VITP), 147 to 167 (FILP…PLGT), 174 to 194 (FGPI…PQII), 211 to 231 (LIVA…LTVT), 252 to 272 (WFCV…ALVI), 292 to 312 (IPLV…VISG), 342 to 362 (IYMP…VLVF), 371 to 391 (AYGL…LIYV), 394 to 414 (TWWK…LLFA), and 418 to 438 (TKIH…IVVM).

It belongs to the HAK/KUP transporter (TC 2.A.72) family.

It localises to the cell membrane. It carries out the reaction K(+)(in) + H(+)(in) = K(+)(out) + H(+)(out). Functionally, transport of potassium into the cell. Likely operates as a K(+):H(+) symporter. The polypeptide is Probable potassium transport system protein Kup (Corynebacterium glutamicum (strain ATCC 13032 / DSM 20300 / JCM 1318 / BCRC 11384 / CCUG 27702 / LMG 3730 / NBRC 12168 / NCIMB 10025 / NRRL B-2784 / 534)).